A 144-amino-acid chain; its full sequence is Large ribosomal subunit protein uL15 (144 aa).

Residues 1 to 53 (MRLNTLSPAEGAKHSAKRLGRGIGSGLGKTGGRGHKGQKSRTGGGVRRGFEGG) form a disordered region. The span at 21–31 (RGIGSGLGKTG) shows a compositional bias: gly residues.

Belongs to the universal ribosomal protein uL15 family. Part of the 50S ribosomal subunit.

Binds to the 23S rRNA. The chain is Large ribosomal subunit protein uL15 from Pasteurella multocida (strain Pm70).